Consider the following 565-residue polypeptide: Adenine deaminase (565 aa).

The protein belongs to the metallo-dependent hydrolases superfamily. Adenine deaminase family. Mn(2+) serves as cofactor.

The catalysed reaction is adenine + H2O + H(+) = hypoxanthine + NH4(+). The polypeptide is Adenine deaminase (Cereibacter sphaeroides (strain KD131 / KCTC 12085) (Rhodobacter sphaeroides)).